A 332-amino-acid chain; its full sequence is T-cell surface glycoprotein CD1c2 (332 aa).

The signal sequence occupies residues 1-17 (MLFLQFLFVDVVLGGSI). Residues 18-300 (TENVVQENIS…IILYWGHGLS (283 aa)) are Extracellular-facing. N25, N38, and N75 each carry an N-linked (GlcNAc...) asparagine glycan. Intrachain disulfides connect C120–C184 and C224–C279. The 88-residue stretch at 205 to 292 (PEVWLSSSPN…HSSLRDQDII (88 aa)) folds into the Ig-like domain. The helical transmembrane segment at 301-321 (VILIALAVIVPLVLLIVLVLL) threads the bilayer. Residues 322 to 332 (CKKRCTYQGIP) lie on the Cytoplasmic side of the membrane.

As to quaternary structure, heterodimer with B2M (beta-2-microglobulin).

It localises to the cell membrane. The protein resides in the endosome membrane. In terms of biological role, antigen-presenting protein that binds self and non-self lipid and glycolipid antigens and presents them to T-cell receptors on natural killer T-cells. In Cavia porcellus (Guinea pig), this protein is T-cell surface glycoprotein CD1c2 (CD1C2).